A 285-amino-acid polypeptide reads, in one-letter code: N-alpha-acetyltransferase 40 (285 aa).

The N-acetyltransferase domain occupies 88 to 274 (INYKLHKSRG…GGGRVVVPCD (187 aa)). Residues tyrosine 116, 163-165 (TEE), and tyrosine 185 contribute to the substrate site. Acetyl-CoA-binding positions include 187 to 189 (VHV) and 195 to 200 (GHGIGR). Threonine 228 provides a ligand contact to substrate. Asparagine 233 contributes to the acetyl-CoA binding site.

It belongs to the acetyltransferase family. NAA40 subfamily.

It localises to the nucleus. Its subcellular location is the cytoplasm. It catalyses the reaction N-terminal L-seryl-[histone H4] + acetyl-CoA = N-terminal N(alpha)-acetyl-L-seryl-[histone H4] + CoA + H(+). It carries out the reaction N-terminal L-seryl-[histone H2A] + acetyl-CoA = N-terminal N(alpha)-acetyl-L-seryl-[histone H2A] + CoA + H(+). Its function is as follows. N-alpha-acetyltransferase that specifically mediates the acetylation of the N-terminal residues of histones H4 and H2A. The sequence is that of N-alpha-acetyltransferase 40 from Saccharomyces cerevisiae (strain ATCC 204508 / S288c) (Baker's yeast).